The chain runs to 188 residues: Elongation factor P (188 aa).

Lys-34 bears the N6-(3,6-diaminohexanoyl)-5-hydroxylysine mark.

Belongs to the elongation factor P family. May be beta-lysylated on the epsilon-amino group of Lys-34 by the combined action of EpmA and EpmB, and then hydroxylated on the C5 position of the same residue by EpmC (if this protein is present). Lysylation is critical for the stimulatory effect of EF-P on peptide-bond formation. The lysylation moiety may extend toward the peptidyltransferase center and stabilize the terminal 3-CCA end of the tRNA. Hydroxylation of the C5 position on Lys-34 may allow additional potential stabilizing hydrogen-bond interactions with the P-tRNA.

The protein localises to the cytoplasm. Its pathway is protein biosynthesis; polypeptide chain elongation. Functionally, involved in peptide bond synthesis. Alleviates ribosome stalling that occurs when 3 or more consecutive Pro residues or the sequence PPG is present in a protein, possibly by augmenting the peptidyl transferase activity of the ribosome. Modification of Lys-34 is required for alleviation. This is Elongation factor P from Haemophilus influenzae (strain PittGG).